The primary structure comprises 239 residues: 2,3,4,5-tetrahydropyridine-2,6-dicarboxylate N-acetyltransferase (239 aa).

This sequence belongs to the transferase hexapeptide repeat family. DapH subfamily.

It carries out the reaction (S)-2,3,4,5-tetrahydrodipicolinate + acetyl-CoA + H2O = L-2-acetamido-6-oxoheptanedioate + CoA. It participates in amino-acid biosynthesis; L-lysine biosynthesis via DAP pathway; LL-2,6-diaminopimelate from (S)-tetrahydrodipicolinate (acetylase route): step 1/3. Catalyzes the transfer of an acetyl group from acetyl-CoA to tetrahydrodipicolinate. This is 2,3,4,5-tetrahydropyridine-2,6-dicarboxylate N-acetyltransferase from Staphylococcus aureus (strain Newman).